Consider the following 376-residue polypeptide: Actin-related protein T1 (376 aa).

It belongs to the actin family.

The protein localises to the cytoplasm. It localises to the cytoskeleton. Its subcellular location is the nucleus. The protein resides in the cytoplasmic vesicle. It is found in the secretory vesicle. The protein localises to the acrosome. Functionally, negatively regulates the Hedgehog (SHH) signaling. Binds to the promoter of the SHH signaling mediator, GLI1, and inhibits its expression. This is Actin-related protein T1 (Actrt1) from Rattus norvegicus (Rat).